The chain runs to 669 residues: DNA ligase 2 (669 aa).

Residues 35–39 and 83–84 contribute to the NAD(+) site; these read DKEYD and SL. The active-site N6-AMP-lysine intermediate is K125. R147, E181, and K317 together coordinate NAD(+). 4 residues coordinate Zn(2+): C410, C413, C426, and C432. Positions 590–669 constitute a BRCT domain; it reads VVENAFTGKT…EEFEQLINNM (80 aa).

The protein belongs to the NAD-dependent DNA ligase family. LigA subfamily. Requires Mg(2+) as cofactor. Mn(2+) is required as a cofactor.

The enzyme catalyses NAD(+) + (deoxyribonucleotide)n-3'-hydroxyl + 5'-phospho-(deoxyribonucleotide)m = (deoxyribonucleotide)n+m + AMP + beta-nicotinamide D-nucleotide.. Functionally, DNA ligase that catalyzes the formation of phosphodiester linkages between 5'-phosphoryl and 3'-hydroxyl groups in double-stranded DNA using NAD as a coenzyme and as the energy source for the reaction. It is essential for DNA replication and repair of damaged DNA. This is DNA ligase 2 from Clostridium acetobutylicum (strain ATCC 824 / DSM 792 / JCM 1419 / IAM 19013 / LMG 5710 / NBRC 13948 / NRRL B-527 / VKM B-1787 / 2291 / W).